A 663-amino-acid chain; its full sequence is Zyxin (663 aa).

The interval 35 to 438 is disordered; it reads PPKPKINPFK…QQDQTLGSQG (404 aa). Composition is skewed to pro residues over residues 122 to 148 and 160 to 211; these read FPPPPPPEFSEPFPPPIEEFFPSPPPL and VPVP…PPSV. Over residues 298–314 the composition is skewed to polar residues; that stretch reads PQKTTEPPAEASQSSPK. Composition is skewed to basic and acidic residues over residues 342-353 and 360-375; these read QRERPRVLEKPR and EPEHEPTVEVQVERTR. Composition is skewed to polar residues over residues 377-393 and 427-438; these read LGPQTESGRSPGAQSTG and TGQQDQTLGSQG. 3 LIM zinc-binding domains span residues 470–531, 532–589, and 590–660; these read ELCG…TLEC, CAVC…RRYA, and PRCC…RARA.

This sequence belongs to the zyxin/ajuba family. Interacts (via LIM2 domain) with hesx1/anf1. In terms of tissue distribution, at the early gastrula stage, expressed at a low level in the animal hemisphere. Expression rises by the end of gastrulation in the anterior part of the embryo, where it gradually increases by the midneurula stage. During neurulation, expression continues most intensively in the anterior part of the neural plate and around it. At later stages, intensely expressed in the brain and at lower levels in the spinal cord, eyes, nasal placodes, within somites, and around the cement gland.

It is found in the cytoplasm. The protein resides in the cytoskeleton. It localises to the cell junction. The protein localises to the focal adhesion. In terms of biological role, adhesion plaque protein. May be a component of a signal transduction pathway that mediates adhesion-stimulated changes in gene expression. Suppresses the transcription-repressing activity of hesx1/anf1. The polypeptide is Zyxin (Xenopus laevis (African clawed frog)).